A 144-amino-acid polypeptide reads, in one-letter code: Putative acetyltransferase SAOUHSC_00995 (144 aa).

Positions 1-141 constitute an N-acetyltransferase domain; the sequence is MFSKVNNQKM…EHIEMTKKLT (141 aa). CoA contacts are provided by residues 71–73, Gly-79, and 112–114; these read VAV and PFY.

This sequence belongs to the UPF0039 (ElaA) family.

In terms of biological role, could catalyze the transfer of an acetyl group from acetyl coenzyme A (AcCoA) to an acceptor substrate and release both CoA and the acetylated product. This chain is Putative acetyltransferase SAOUHSC_00995, found in Staphylococcus aureus (strain NCTC 8325 / PS 47).